The sequence spans 146 residues: Probable acetyltransferase HI_0677 (146 aa).

The N-acetyltransferase domain maps to 1-146; that stretch reads MKLFKAEQWN…ERLFELSLSC (146 aa).

The sequence is that of Probable acetyltransferase HI_0677 from Haemophilus influenzae (strain ATCC 51907 / DSM 11121 / KW20 / Rd).